Here is a 458-residue protein sequence, read N- to C-terminus: UDP-N-acetylglucosamine 1-carboxyvinyltransferase (458 aa).

Phosphoenolpyruvate is bound at residue 34-35 (KN). Arginine 104 is a UDP-N-acetyl-alpha-D-glucosamine binding site. Residue cysteine 128 is the Proton donor of the active site. The residue at position 128 (cysteine 128) is a 2-(S-cysteinyl)pyruvic acid O-phosphothioketal. Positions 319 and 341 each coordinate UDP-N-acetyl-alpha-D-glucosamine.

This sequence belongs to the EPSP synthase family. MurA subfamily.

Its subcellular location is the cytoplasm. It catalyses the reaction phosphoenolpyruvate + UDP-N-acetyl-alpha-D-glucosamine = UDP-N-acetyl-3-O-(1-carboxyvinyl)-alpha-D-glucosamine + phosphate. The protein operates within cell wall biogenesis; peptidoglycan biosynthesis. Cell wall formation. Adds enolpyruvyl to UDP-N-acetylglucosamine. The protein is UDP-N-acetylglucosamine 1-carboxyvinyltransferase of Prochlorococcus marinus (strain MIT 9515).